The chain runs to 209 residues: Kynurenine formamidase (209 aa).

Trp-18 serves as a coordination point for substrate. Zn(2+)-binding residues include His-48, His-52, and Asp-54. His-58 functions as the Proton donor/acceptor in the catalytic mechanism. Zn(2+) is bound by residues His-160 and Glu-172.

The protein belongs to the Cyclase 1 superfamily. KynB family. Homodimer. Requires Zn(2+) as cofactor.

The enzyme catalyses N-formyl-L-kynurenine + H2O = L-kynurenine + formate + H(+). It functions in the pathway amino-acid degradation; L-tryptophan degradation via kynurenine pathway; L-kynurenine from L-tryptophan: step 2/2. Its function is as follows. Catalyzes the hydrolysis of N-formyl-L-kynurenine to L-kynurenine, the second step in the kynurenine pathway of tryptophan degradation. This chain is Kynurenine formamidase, found in Maricaulis maris (strain MCS10) (Caulobacter maris).